Reading from the N-terminus, the 897-residue chain is High molecular weight rhoptry protein 3 (897 aa).

Residues 1 to 24 form the signal peptide; it reads MRSKHLVTLFIITFLSFSTVKVWG. Disulfide bonds link Cys157–Cys231, Cys244–Cys253, Cys262–Cys276, Cys421–Cys620, and Cys475–Cys536. The helical transmembrane segment at 597 to 615 threads the bilayer; it reads FVLYFISIISVLYINEYYY. Disordered regions lie at residues 788–845 and 859–897; these read KEQS…SNLK and QLDKEKPKKKKSKRKKKRDSSSDRILLEESKTFTSENEL. Over residues 792–801 the composition is skewed to polar residues; the sequence is KSTSAASTSD. Residues 802–817 are compositionally biased toward low complexity; the sequence is ELSGSEGPSTESTSTG. At Ser804 the chain carries Phosphoserine. Positions 820–832 are enriched in basic and acidic residues; sequence GEDKTTDNTYKEM. Over residues 865–876 the composition is skewed to basic residues; it reads PKKKKSKRKKKR. Positions 877-889 are enriched in basic and acidic residues; the sequence is DSSSDRILLEESK.

Component of the RhopH complex, composed of CLAG3.1/CLAG3.2, RhopH2 and RhopH3 with a 1:1:1 subunit stoichiometry. Interacts with CLAG3.1/CLAG3.2. Interacts with CDPK1; the interaction promotes RhopH3 phosphorylation in merozoites. In terms of processing, proteolytically cleaved near C-terminus.

The protein resides in the host cell membrane. The protein localises to the parasitophorous vacuole membrane. Its subcellular location is the cytoplasmic vesicle. It localises to the secretory vesicle. It is found in the rhoptry. Its function is as follows. Participates in the formation of new permeability pathways in Plasmodium-infected erythrocytes enabling the uptake of nutrients from the blood plasma. Required for maintaining invasion capacity of merozoites. Required for the trophozoite to schizont developmental transition of the intracellular parasite. The protein is High molecular weight rhoptry protein 3 of Plasmodium falciparum.